Reading from the N-terminus, the 724-residue chain is Pre-mRNA-splicing factor CLF1 (724 aa).

HAT repeat units lie at residues 55 to 87 (EFQA…WEAS), 89 to 121 (NEYE…MELK), 123 to 155 (RNIN…LEEL), 157 to 188 (LNVS…LEER), 190 to 221 (NELD…FEED), 223 to 262 (GQPD…METR), 264 to 298 (KEFE…FEKQ), 308 to 340 (TVLG…LEED), 352 to 386 (VEPM…LWLQ), 396 to 432 (KDYD…FEIR), 434 to 465 (LDVS…LEMR), 467 to 499 (REFD…VESA), 501 to 534 (EDFE…FEAG), 536 to 567 (GERE…MEIA), 585 to 626 (GDAD…EHGD), and 635 to 667 (DMLP…DDEK). The tract at residues 681–724 (QAWAQQRAGQGEEGGLSYDLPSDSESENEDEDGDNREEEGMDQD) is disordered. Residues 702 to 724 (SDSESENEDEDGDNREEEGMDQD) are compositionally biased toward acidic residues.

Belongs to the crooked-neck family. As to quaternary structure, associated with the spliceosome.

It localises to the nucleus. In terms of biological role, involved in pre-mRNA splicing and cell cycle progression. Required for the spliceosome assembly and initiation of the DNA replication. The chain is Pre-mRNA-splicing factor CLF1 (CLF1) from Cryptococcus neoformans var. grubii serotype A (strain H99 / ATCC 208821 / CBS 10515 / FGSC 9487) (Filobasidiella neoformans var. grubii).